The following is a 247-amino-acid chain: Coiled-coil domain-containing protein 124 homolog (247 aa).

The segment at 1–146 (MGGKKFGTNS…TTTTGSDDHE (146 aa)) is disordered. Residues 8 to 85 (TNSKAEEARS…QEDKEIKERY (78 aa)) are a coiled coil. The span at 11 to 114 (KAEEARSKKA…EQKQREKELA (104 aa)) shows a compositional bias: basic and acidic residues. Over residues 122-140 (VVVVPTTTTTTTTTTTTTT) the composition is skewed to low complexity.

Belongs to the CCDC124 family. In terms of assembly, associates with translationally inactive ribosomes in the nonrotated state.

In terms of biological role, ribosome-binding protein involved in ribosome hibernation: associates with translationally inactive ribosomes and stabilizes the nonrotated conformation of the 80S ribosome, thereby promoting ribosome preservation and storage. This Dictyostelium discoideum (Social amoeba) protein is Coiled-coil domain-containing protein 124 homolog.